The primary structure comprises 96 residues: Co-chaperonin GroES (96 aa).

Belongs to the GroES chaperonin family. Heptamer of 7 subunits arranged in a ring. Interacts with the chaperonin GroEL.

It is found in the cytoplasm. In terms of biological role, together with the chaperonin GroEL, plays an essential role in assisting protein folding. The GroEL-GroES system forms a nano-cage that allows encapsulation of the non-native substrate proteins and provides a physical environment optimized to promote and accelerate protein folding. GroES binds to the apical surface of the GroEL ring, thereby capping the opening of the GroEL channel. The protein is Co-chaperonin GroES of Hahella chejuensis (strain KCTC 2396).